Reading from the N-terminus, the 364-residue chain is DNA polymerase IV (364 aa).

One can recognise a UmuC domain in the interval 7 to 187 (IIHVDMDAFY…LPVNRVPGVG (181 aa)). Mg(2+) contacts are provided by Asp-11 and Asp-105. The active site involves Glu-106.

It belongs to the DNA polymerase type-Y family. As to quaternary structure, monomer. Mg(2+) serves as cofactor.

The protein resides in the cytoplasm. It catalyses the reaction DNA(n) + a 2'-deoxyribonucleoside 5'-triphosphate = DNA(n+1) + diphosphate. In terms of biological role, poorly processive, error-prone DNA polymerase involved in untargeted mutagenesis. Copies undamaged DNA at stalled replication forks, which arise in vivo from mismatched or misaligned primer ends. These misaligned primers can be extended by PolIV. Exhibits no 3'-5' exonuclease (proofreading) activity. May be involved in translesional synthesis, in conjunction with the beta clamp from PolIII. The sequence is that of DNA polymerase IV from Stenotrophomonas maltophilia (strain K279a).